The following is a 628-amino-acid chain: Dual specificity testis-specific protein kinase 1 (628 aa).

Positions 1–35 (MAGERPPLRGPGPGETPVEGPGGAGGGPGRGRPSS) are disordered. A compositionally biased stretch (gly residues) spans 20–30 (GPGGAGGGPGR). The 259-residue stretch at 52 to 310 (FDCAEKIGAG…EITQHLEQIL (259 aa)) folds into the Protein kinase domain. Residues 58-66 (IGAGFFSEV) and Lys-81 contribute to the ATP site. Asp-170 functions as the Proton acceptor in the catalytic mechanism. At Ser-215 the chain carries Phosphoserine; by autocatalysis. Disordered regions lie at residues 330 to 376 (TYNQ…DNLT), 424 to 490 (PESL…QLPL), and 538 to 568 (RAQHSLPRAAALERTEPSPPPSAPREQEEGL). At Arg-338 the chain carries Omega-N-methylarginine. Positions 348-357 (SDPRLSRSRS) are enriched in basic and acidic residues. A required for interaction with YWHAB region spans residues 421–526 (VASPESLVQP…NNNPPAVVVN (106 aa)). Residue Ser-439 is modified to Phosphoserine. Over residues 478–487 (EPEPPGPAPQ) the composition is skewed to pro residues. The required for interaction with PARVA stretch occupies residues 529-626 (QGWAREPWNR…PTPSLQLPGA (98 aa)). The tract at residues 529-628 (QGWAREPWNR…PSLQLPGARS (100 aa)) is required for interaction with SPRED1 and SPRY2. Required for TESK1-mediated dephosphorylation of SPRY2 and SPRY2 inhibition of ERK phosphorylation.

The protein belongs to the protein kinase superfamily. TKL Ser/Thr protein kinase family. Interacts (via both C- and N-termini) with SPRY4 (via C-terminus); the interaction inhibits TESK1 kinase activity. Interacts with TAOK1; the interaction inhibits TAOK1 kinase activity. Interacts (via C-terminus) with SPRED1 (via C-terminus); the interaction inhibits TESK1 kinase activity. Interacts (via C-terminus) with PARVA/PARVIN (via C-terminus); the interaction inhibits TESK1 kinase activity. Interacts with YWHAB/14-3-3 beta; the interaction is dependent on the phosphorylation of TESK1 Ser-439 and inhibits TESK1 kinase activity. Interacts with SPRY1, SPRY3 and SPRED2. Interacts (via C-terminus) with SPRY2 (via C-terminus); the interaction disrupts SPRY2 interaction with PPP2CA/PP2A-C, possibly by vesicular sequestration of SPRY2. Therefore dephosphorylation of SPRY2 by the serine/threonine-protein phosphatase 2A (PP2A) holoenzyme is lost, inhibiting its interaction with GRB2. Mg(2+) serves as cofactor. Requires Mn(2+) as cofactor. In terms of processing, autophosphorylated on serine and tyrosine residues. In terms of tissue distribution, weakly expressed in sciatic nerves (at protein level). Highly expressed in testicular germ cells. Expressed at low levels in brain, lung, heart, liver and kidney.

It localises to the cytoplasm. Its subcellular location is the perinuclear region. The protein resides in the cytoskeleton. It is found in the microtubule organizing center. The protein localises to the centrosome. It localises to the cell projection. Its subcellular location is the lamellipodium. It catalyses the reaction L-seryl-[protein] + ATP = O-phospho-L-seryl-[protein] + ADP + H(+). The catalysed reaction is L-threonyl-[protein] + ATP = O-phospho-L-threonyl-[protein] + ADP + H(+). It carries out the reaction L-tyrosyl-[protein] + ATP = O-phospho-L-tyrosyl-[protein] + ADP + H(+). With respect to regulation, activated by autophosphorylation on Ser-215. Kinase activity is inhibited by SPRED1. Functionally, dual specificity protein kinase activity catalyzing autophosphorylation and phosphorylation of exogenous substrates on both serine/threonine and tyrosine residues. Regulates the cellular cytoskeleton by enhancing actin stress fiber formation via phosphorylation of cofilin and by preventing microtubule breakdown via inhibition of TAOK1/MARKK kinase activity. Inhibits podocyte motility via regulation of actin cytoskeletal dynamics and phosphorylation of CFL1. Positively regulates integrin-mediated cell spreading, via phosphorylation of cofilin. Suppresses ciliogenesis via multiple pathways; phosphorylation of CFL1, suppression of ciliary vesicle directional trafficking to the ciliary base, and by facilitating YAP1 nuclear localization where it acts as a transcriptional corepressor of the TEAD4 target genes AURKA and PLK1. Probably plays a central role at and after the meiotic phase of spermatogenesis. This is Dual specificity testis-specific protein kinase 1 (Tesk1) from Rattus norvegicus (Rat).